Reading from the N-terminus, the 338-residue chain is MEHKLFSSYVVKGVTLKNRIVMSPMCMYSSDQKDGKIRPFHISHYESRAAGQVGLIIVEATAVTPQGRISPYDLGIWSDDHISGLTETVERIHAHGAKAAIQLAHAGRKAELDGPIIAPSAISYDKMKTPDAMTEEQISETIEAFKLGALRAKKAGFDIIEIHGAHGYLINEFLSPLTNKRTDAYGGSLENRYRLLREIISEIQTVWDGPLFVRISAAEYAEGGNELSDFITLAKWMKKQGIDLIDCSSGAVVPAPIPVYPGYQVPLAEAIRHEANIATGAVGLITSGIQAEEILQNERADLIFVARELLRNPYWPREAALELGTTISGPSQYDRAWL.

23 to 26 (SPMC) is an FMN binding site. Y28 lines the substrate pocket. The FMN site is built by A60 and Q102. Substrate is bound at residue 163–166 (HGAH). FMN-binding positions include R214 and 306-307 (AR).

Belongs to the NADH:flavin oxidoreductase/NADH oxidase family. NamA subfamily. Homotetramer. Requires FMN as cofactor.

The catalysed reaction is A + NADPH + H(+) = AH2 + NADP(+). Catalyzes the reduction of the double bond of an array of alpha,beta-unsaturated aldehydes and ketones. It also reduces the nitro group of nitroester and nitroaromatic compounds. It could have a role in detoxification processes. This Halalkalibacterium halodurans (strain ATCC BAA-125 / DSM 18197 / FERM 7344 / JCM 9153 / C-125) (Bacillus halodurans) protein is NADPH dehydrogenase.